A 541-amino-acid chain; its full sequence is Chaperonin GroEL (541 aa).

ATP is bound by residues 29–32, 86–90, Gly413, 478–480, and Asp494; these read TIGP, DGTTT, and NAA.

Belongs to the chaperonin (HSP60) family. As to quaternary structure, forms a cylinder of 14 subunits composed of two heptameric rings stacked back-to-back. Interacts with the co-chaperonin GroES.

Its subcellular location is the cytoplasm. The enzyme catalyses ATP + H2O + a folded polypeptide = ADP + phosphate + an unfolded polypeptide.. Together with its co-chaperonin GroES, plays an essential role in assisting protein folding. The GroEL-GroES system forms a nano-cage that allows encapsulation of the non-native substrate proteins and provides a physical environment optimized to promote and accelerate protein folding. The sequence is that of Chaperonin GroEL from Oenococcus oeni (strain ATCC BAA-331 / PSU-1).